The primary structure comprises 128 residues: Iron-sulfur cluster insertion protein ErpA (128 aa).

Iron-sulfur cluster is bound by residues Cys-56, Cys-120, and Cys-122.

This sequence belongs to the HesB/IscA family. In terms of assembly, homodimer. The cofactor is iron-sulfur cluster.

Required for insertion of 4Fe-4S clusters for at least IspG. The sequence is that of Iron-sulfur cluster insertion protein ErpA from Xylella fastidiosa (strain M12).